The primary structure comprises 30 residues: Serum amyloid P-component (30 aa).

Residues 1–30 (APQDLSGKMFIFPQETSTANVXLTARSQDF) enclose the Pentraxin (PTX) domain.

This sequence belongs to the pentraxin family. In terms of assembly, homopentamer. Discoid arrangement of 5 covalently bound subunits. The cofactor is Ca(2+).

It is found in the secreted. The sequence is that of Serum amyloid P-component from Anarhichas lupus (Atlantic wolffish).